Reading from the N-terminus, the 289-residue chain is MSSNTRVALVTGANKGIGFAIVRDLCRQFAGDVVLTARDVARGQAAVKQLQAEGLSPRFHQLDIIDLQSIRALCDFLRKEYGGLDVLVNNAAIAFQLDNPTPFHIQAELTMKTNFMGTRNVCTELLPLIKPQGRVVNVSSTEGVRALNECSPELQQKFKSETITEEELVGLMNKFVEDTKNGVHRKEGWSDSTYGVTKIGVSVLSRIYARKLREQRAGDKILLNACCPGWVRTDMGGPKAPKSPEVGAETPVYLALLPSDAEGPHGQFVTDKKVVEWGVPPESYPWVNA.

S2 carries the N-acetylserine modification. S2 is subject to Phosphoserine. NADP(+) is bound by residues V10–V34, D63–I64, and N90. Glutathione is bound by residues F95–L97 and Q106. S140 lines the substrate pocket. Glutathione is bound at residue T193 to Y194. Catalysis depends on Y194, which acts as the Proton acceptor. NADP(+) is bound by residues Y194–K198 and V231–T233. K239 carries the post-translational modification N6-1-carboxyethyl lysine.

It belongs to the short-chain dehydrogenases/reductases (SDR) family. Monomer. In terms of tissue distribution, expressed in kidney (at protein level).

The protein localises to the cytoplasm. The catalysed reaction is a secondary alcohol + NADP(+) = a ketone + NADPH + H(+). It carries out the reaction prostaglandin E1 + NADP(+) = 15-oxoprostaglandin E1 + NADPH + H(+). It catalyses the reaction prostaglandin F2alpha + NADP(+) = prostaglandin E2 + NADPH + H(+). The enzyme catalyses prostaglandin D2 + NADP(+) = 15-oxoprostaglandin D2 + NADPH + H(+). The catalysed reaction is prostaglandin E2 + NADP(+) = 15-oxoprostaglandin E2 + NADPH + H(+). It carries out the reaction prostaglandin F2alpha + NADP(+) = 15-oxoprostaglandin F2alpha + NADPH + H(+). It catalyses the reaction menadione + NADPH + H(+) = menadiol + NADP(+). The enzyme catalyses daunorubicin + NADPH + H(+) = 13-dihydrodaunorubicin + NADP(+). The catalysed reaction is S-nitrosoglutathione + NADPH + H(+) = S-(hydroxysulfenamide)glutathione + NADP(+). It carries out the reaction a primary alcohol + NADP(+) = an aldehyde + NADPH + H(+). It catalyses the reaction cortisol + NADPH + H(+) = 20beta-dihydrocortisol + NADP(+). The enzyme catalyses corticosterone + NADPH + H(+) = 20beta-dihydrocorticosterone + NADP(+). Its function is as follows. NADPH-dependent reductase with broad substrate specificity. Catalyzes the reduction of a wide variety of carbonyl compounds including quinones, prostaglandins, menadione, plus various xenobiotics. Catalyzes the reduction of the antitumor anthracyclines doxorubicin and daunorubicin to the cardiotoxic compounds doxorubicinol and daunorubicinol. Can convert prostaglandin E2 to prostaglandin F2-alpha. Can bind glutathione, which explains its higher affinity for glutathione-conjugated substrates. Catalyzes the reduction of S-nitrosoglutathione. In addition, participates in the glucocorticoid metabolism by catalyzing the NADPH-dependent cortisol/corticosterone into 20beta-dihydrocortisol (20b-DHF) or 20beta-corticosterone (20b-DHB), which are weak agonists of NR3C1 and NR3C2 in adipose tissue. The polypeptide is Carbonyl reductase [NADPH] 1 (Sus scrofa (Pig)).